The primary structure comprises 418 residues: Tyrosine--tRNA ligase (418 aa).

An L-tyrosine-binding site is contributed by Tyr-34. A 'HIGH' region motif is present at residues 39–48 (PTADSLHLGH). Positions 169 and 173 each coordinate L-tyrosine. The 'KMSKS' region signature appears at 229–233 (KFGKS). Lys-232 is an ATP binding site. Residues 352-418 (NNIVELLVSS…GKKKYFVLTY (67 aa)) enclose the S4 RNA-binding domain.

It belongs to the class-I aminoacyl-tRNA synthetase family. TyrS type 1 subfamily. In terms of assembly, homodimer.

Its subcellular location is the cytoplasm. It carries out the reaction tRNA(Tyr) + L-tyrosine + ATP = L-tyrosyl-tRNA(Tyr) + AMP + diphosphate + H(+). In terms of biological role, catalyzes the attachment of tyrosine to tRNA(Tyr) in a two-step reaction: tyrosine is first activated by ATP to form Tyr-AMP and then transferred to the acceptor end of tRNA(Tyr). This chain is Tyrosine--tRNA ligase, found in Streptococcus pneumoniae (strain CGSP14).